Here is a 98-residue protein sequence, read N- to C-terminus: Large ribosomal subunit protein bL28 (98 aa).

This sequence belongs to the bacterial ribosomal protein bL28 family.

This chain is Large ribosomal subunit protein bL28, found in Bartonella bacilliformis (strain ATCC 35685 / KC583 / Herrer 020/F12,63).